The chain runs to 227 residues: PKHD-type hydroxylase Bcep18194_B0892 (227 aa).

The region spanning 78–178 is the Fe2OG dioxygenase domain; it reads KVFPPLFNRY…RVASFFWIQS (101 aa). Positions 96, 98, and 159 each coordinate Fe cation. 2-oxoglutarate is bound at residue R169.

Requires Fe(2+) as cofactor. L-ascorbate serves as cofactor.

The polypeptide is PKHD-type hydroxylase Bcep18194_B0892 (Burkholderia lata (strain ATCC 17760 / DSM 23089 / LMG 22485 / NCIMB 9086 / R18194 / 383)).